Consider the following 132-residue polypeptide: uncharacterized protein (132 aa).

Helical transmembrane passes span phenylalanine 44–isoleucine 64 and isoleucine 75–phenylalanine 95.

The protein localises to the cytoplasm. Its subcellular location is the membrane. This is an uncharacterized protein from Schizosaccharomyces pombe (strain 972 / ATCC 24843) (Fission yeast).